We begin with the raw amino-acid sequence, 242 residues long: MPDEKLPQYNEVWNDLEKGCLHSCPSYSVNNHVNNPIVKQNSTLTQPSLRKKNTMAAPARLRKRSENVRLTQARYAIFHIFLPFILTLLLYHNFYNYFDQALADLNSVVKYVIETIVLIFTYVMTVIIVYFSFSLIKLAFEEAYVYAPSVAKANEGLAKHVAKTIAGLVKYVAKAIQGLAHIILSLLLFILGLEVIEQDEETGDVEMSSMRGQAITTEPASDNTMAEGTDCNTSKDVESGSS.

Helical transmembrane passes span 75–95 (YAIF…HNFY), 116–136 (IVLI…FSLI), and 176–196 (IQGL…LEVI). A disordered region spans residues 204 to 242 (DVEMSSMRGQAITTEPASDNTMAEGTDCNTSKDVESGSS). Residues 210–232 (MRGQAITTEPASDNTMAEGTDCN) are compositionally biased toward polar residues. The segment covering 233–242 (TSKDVESGSS) has biased composition (basic and acidic residues).

The protein localises to the cytoplasm. It is found in the membrane. This is an uncharacterized protein from Schizosaccharomyces pombe (strain 972 / ATCC 24843) (Fission yeast).